A 653-amino-acid chain; its full sequence is Macrolide export ATP-binding/permease protein MacB (653 aa).

Residues 6–244 (LQLTRVTRRF…DAASGASGDA (239 aa)) enclose the ABC transporter domain. Position 42–49 (42–49 (GASGSGKS)) interacts with ATP. Transmembrane regions (helical) follow at residues 278–298 (LLTM…VAIG), 526–546 (LTLL…IGVM), 587–607 (MGGA…SLFV), and 616–636 (AGSI…FGFM).

This sequence belongs to the ABC transporter superfamily. Macrolide exporter (TC 3.A.1.122) family. As to quaternary structure, homodimer.

It is found in the cell inner membrane. Non-canonical ABC transporter that contains transmembrane domains (TMD), which form a pore in the inner membrane, and an ATP-binding domain (NBD), which is responsible for energy generation. Confers resistance against macrolides. In Burkholderia thailandensis (strain ATCC 700388 / DSM 13276 / CCUG 48851 / CIP 106301 / E264), this protein is Macrolide export ATP-binding/permease protein MacB.